Consider the following 335-residue polypeptide: Auxin-responsive protein IAA6 (335 aa).

The EAR-like (transcriptional repression) motif lies at 51-55 (LKLGL). Disordered regions lie at residues 81-102 (LSFFPKHSKTTSSTTTTTGAKR), 143-180 (KKGCCPPPPPPHGAPATPARNRPQTQGRGAAAPVVGWP), and 188-207 (NLASSSSSKHSPEPQNDNAN). The PB1 domain maps to 217–321 (NPLVKINMDG…TAKRLRVLRS (105 aa)).

Belongs to the Aux/IAA family. As to quaternary structure, homodimers and heterodimers. Highly expressed in roots. Expressed in shoots and flowers.

The protein localises to the nucleus. In terms of biological role, aux/IAA proteins are short-lived transcriptional factors that function as repressors of early auxin response genes at low auxin concentrations. The polypeptide is Auxin-responsive protein IAA6 (IAA6) (Oryza sativa subsp. japonica (Rice)).